Reading from the N-terminus, the 173-residue chain is MSRRCTEVKRKSLPSNKYQSISAATPNQIMLASKLINKLTHHGNKELVEKMLDKIIQHIKHKYKADGFEVLESACNNVKPSLQVESLRIGGATYQVPSPVNELRSYTLAIKWIINSAANRTFEKSMWQKIAEELYEASNGRGGAVKKKDDNHKMAEANQAFSHLITKRRSRGN.

It belongs to the universal ribosomal protein uS7 family. In terms of assembly, part of the 30S ribosomal subunit. Contacts proteins S9 and S11.

Its function is as follows. One of the primary rRNA binding proteins, it binds directly to 16S rRNA where it nucleates assembly of the head domain of the 30S subunit. Is located at the subunit interface close to the decoding center, probably blocks exit of the E-site tRNA. The protein is Small ribosomal subunit protein uS7 of Orientia tsutsugamushi (strain Boryong) (Rickettsia tsutsugamushi).